The chain runs to 469 residues: Glutamine synthetase (469 aa).

The GS beta-grasp domain occupies 15–96 (EDVKFIDVRF…INFFIHDPIT (82 aa)). The region spanning 104 to 469 (PRNVAKKAEA…PYEYEQYYDV (366 aa)) is the GS catalytic domain. Positions 129 and 131 each coordinate Mg(2+). E205 contributes to the ATP binding site. The Mg(2+) site is built by E210 and E218. 221 to 223 (YKF) contributes to the ATP binding site. L-glutamate contacts are provided by residues 262-263 (NG) and G263. H267 serves as a coordination point for Mg(2+). ATP-binding positions include 269–271 (HQS) and S271. R320, E326, and R338 together coordinate L-glutamate. Residues R338, R343, and K352 each coordinate ATP. E357 provides a ligand contact to Mg(2+). R359 is an L-glutamate binding site. Y397 carries the O-AMP-tyrosine modification.

Belongs to the glutamine synthetase family. Oligomer of 12 subunits arranged in the form of two hexagons. Mg(2+) serves as cofactor.

The protein resides in the cytoplasm. It catalyses the reaction L-glutamate + NH4(+) + ATP = L-glutamine + ADP + phosphate + H(+). Its activity is regulated as follows. The activity of this enzyme could be controlled by adenylation under conditions of abundant glutamine. Catalyzes the ATP-dependent biosynthesis of glutamine from glutamate and ammonia. The polypeptide is Glutamine synthetase (Streptomyces viridochromogenes).